We begin with the raw amino-acid sequence, 534 residues long: MTDQTTRLPIRRALISVSDKTGILEFARELEALGVEILSTGGTFKLLQDNGVAAVEVADYTGFAEMMDGRVKTLHPKIHGGILGRRGIDDAIMNEHGIKPIDLVAVNLYPFEATVSKPGCDLPTAIENIDIGGPTMVRSAAKNHKDVAIVVNAGDYGQVLESLKAGGLTYAQRFDLMLKAFEHTAAYDGMIANYLGGVDQTADTLSTEGRSQFPRTFNTQFVKAQEMRYGENPHQSAAFYVEAKPAEVGIATATQLQGKELSFNNVADTDAALECVKSFVKPACVIVKHANPCGVAVCPDDEGGIRQAYELAYATDSESAFGGIIAFNRELDAATAKAIVERQFVEVIIAPSVSAEARSIIASKANVRLLTSGQWSERLPAWDYKRVNGGLLVQSRDIGMITEADLKVVTQRAPTEHEMHDLIFAWKVAKYVKSNAIVYARNRQTIGVGAGQMSRVNSARIAAIKAEHAGLQVQGAVMASDAFFPFRDGIDNAAKVGISAVIQPGGSMRDNEVIAAADEAGIAMVFTGMRHFRH.

Residues 6–151 (TRLPIRRALI…KNHKDVAIVV (146 aa)) enclose the MGS-like domain.

Belongs to the PurH family.

It carries out the reaction (6R)-10-formyltetrahydrofolate + 5-amino-1-(5-phospho-beta-D-ribosyl)imidazole-4-carboxamide = 5-formamido-1-(5-phospho-D-ribosyl)imidazole-4-carboxamide + (6S)-5,6,7,8-tetrahydrofolate. The catalysed reaction is IMP + H2O = 5-formamido-1-(5-phospho-D-ribosyl)imidazole-4-carboxamide. It participates in purine metabolism; IMP biosynthesis via de novo pathway; 5-formamido-1-(5-phospho-D-ribosyl)imidazole-4-carboxamide from 5-amino-1-(5-phospho-D-ribosyl)imidazole-4-carboxamide (10-formyl THF route): step 1/1. The protein operates within purine metabolism; IMP biosynthesis via de novo pathway; IMP from 5-formamido-1-(5-phospho-D-ribosyl)imidazole-4-carboxamide: step 1/1. This chain is Bifunctional purine biosynthesis protein PurH, found in Pseudomonas syringae pv. tomato (strain ATCC BAA-871 / DC3000).